The primary structure comprises 215 residues: Thiamine-phosphate synthase (215 aa).

4-amino-2-methyl-5-(diphosphooxymethyl)pyrimidine is bound by residues 37 to 41 and asparagine 69; that span reads QLRIK. The Mg(2+) site is built by aspartate 70 and aspartate 89. Residue serine 108 participates in 4-amino-2-methyl-5-(diphosphooxymethyl)pyrimidine binding. 134–136 serves as a coordination point for 2-[(2R,5Z)-2-carboxy-4-methylthiazol-5(2H)-ylidene]ethyl phosphate; sequence TQT. Lysine 137 serves as a coordination point for 4-amino-2-methyl-5-(diphosphooxymethyl)pyrimidine. 2-[(2R,5Z)-2-carboxy-4-methylthiazol-5(2H)-ylidene]ethyl phosphate is bound by residues glycine 166 and 186–187; that span reads VS.

It belongs to the thiamine-phosphate synthase family. Requires Mg(2+) as cofactor.

The catalysed reaction is 2-[(2R,5Z)-2-carboxy-4-methylthiazol-5(2H)-ylidene]ethyl phosphate + 4-amino-2-methyl-5-(diphosphooxymethyl)pyrimidine + 2 H(+) = thiamine phosphate + CO2 + diphosphate. It carries out the reaction 2-(2-carboxy-4-methylthiazol-5-yl)ethyl phosphate + 4-amino-2-methyl-5-(diphosphooxymethyl)pyrimidine + 2 H(+) = thiamine phosphate + CO2 + diphosphate. It catalyses the reaction 4-methyl-5-(2-phosphooxyethyl)-thiazole + 4-amino-2-methyl-5-(diphosphooxymethyl)pyrimidine + H(+) = thiamine phosphate + diphosphate. It participates in cofactor biosynthesis; thiamine diphosphate biosynthesis; thiamine phosphate from 4-amino-2-methyl-5-diphosphomethylpyrimidine and 4-methyl-5-(2-phosphoethyl)-thiazole: step 1/1. Its function is as follows. Condenses 4-methyl-5-(beta-hydroxyethyl)thiazole monophosphate (THZ-P) and 2-methyl-4-amino-5-hydroxymethyl pyrimidine pyrophosphate (HMP-PP) to form thiamine monophosphate (TMP). This is Thiamine-phosphate synthase from Yersinia pestis (strain Pestoides F).